The primary structure comprises 147 residues: 3-dehydroquinate dehydratase (147 aa).

Residue Tyr-23 is the Proton acceptor of the active site. Substrate-binding residues include Asn-74, His-80, and Asp-87. His-100 functions as the Proton donor in the catalytic mechanism. Residues 101–102 and Arg-111 each bind substrate; that span reads LS.

Belongs to the type-II 3-dehydroquinase family. Homododecamer.

The catalysed reaction is 3-dehydroquinate = 3-dehydroshikimate + H2O. It functions in the pathway metabolic intermediate biosynthesis; chorismate biosynthesis; chorismate from D-erythrose 4-phosphate and phosphoenolpyruvate: step 3/7. In terms of biological role, catalyzes a trans-dehydration via an enolate intermediate. The protein is 3-dehydroquinate dehydratase of Glaesserella parasuis serovar 5 (strain SH0165) (Haemophilus parasuis).